Here is a 259-residue protein sequence, read N- to C-terminus: Thiazole synthase (259 aa).

The active-site Schiff-base intermediate with DXP is the lysine 95. 1-deoxy-D-xylulose 5-phosphate is bound by residues glycine 156, 183–184 (AG), and 205–206 (NS).

Belongs to the ThiG family. In terms of assembly, homotetramer. Forms heterodimers with either ThiH or ThiS.

It localises to the cytoplasm. The enzyme catalyses [ThiS sulfur-carrier protein]-C-terminal-Gly-aminoethanethioate + 2-iminoacetate + 1-deoxy-D-xylulose 5-phosphate = [ThiS sulfur-carrier protein]-C-terminal Gly-Gly + 2-[(2R,5Z)-2-carboxy-4-methylthiazol-5(2H)-ylidene]ethyl phosphate + 2 H2O + H(+). The protein operates within cofactor biosynthesis; thiamine diphosphate biosynthesis. Catalyzes the rearrangement of 1-deoxy-D-xylulose 5-phosphate (DXP) to produce the thiazole phosphate moiety of thiamine. Sulfur is provided by the thiocarboxylate moiety of the carrier protein ThiS. In vitro, sulfur can be provided by H(2)S. The sequence is that of Thiazole synthase from Coxiella burnetii (strain RSA 331 / Henzerling II).